A 512-amino-acid polypeptide reads, in one-letter code: Immunoglobulin delta heavy chain (512 aa).

Ig-like domains are found at residues 1 to 97 (RLQL…MYYC) and 135 to 227 (PDVF…KEIF). Residues 1-129 (RLQLQESGPG…GQGTTVHVSS (129 aa)) are variable (V) domain, involved in antigen recognition. Intrachain disulfides connect Cys-22/Cys-97 and Cys-157/Cys-213. Positions 130–512 (APTKAPDVFP…VSYVTDHGPM (383 aa)) are constant (C) domain. The segment at 225 to 296 (EIFRWPESPK…TPECPSHTQP (72 aa)) is disordered. The segment covering 235–247 (AQASSVPTAQPQA) has biased composition (polar residues). A glycan (O-linked (GalNAc...) serine) is linked at Ser-238. O-linked (GalNAc...) threonine glycosylation is found at Thr-255, Thr-256, Thr-260, and Thr-261. Residues 267 to 287 (GGEEKKKEKEKEEQEERETKT) are compositionally biased toward basic and acidic residues. Ig-like domains lie at 304–392 (PAVQ…RLMA) and 396–502 (PAAQ…RSLE). 2 disulfide bridges follow: Cys-319/Cys-378 and Cys-423/Cys-484. N-linked (GlcNAc...) asparagine glycans are attached at residues Asn-354, Asn-445, and Asn-496.

As to quaternary structure, immunoglobulins are composed of two identical heavy chains and two identical light chains; disulfide-linked. An IgD molecule contains thus a delta heavy chain combined with either a kappa or a lambda light chains. Kappa light chains are found predominantly on the membrane IgD (mIgD) form and lambda on the secreted IgD (sIgD) form, this fact is poorly understood. Membrane-bound IgD molecules are non-covalently associated with a heterodimer of CD79A and CD79B.

It is found in the secreted. It localises to the cell membrane. Immunoglobulins, also known as antibodies, are membrane-bound or secreted glycoproteins produced by B lymphocytes. In the recognition phase of humoral immunity, the membrane-bound immunoglobulins serve as receptors which, upon binding of a specific antigen, trigger the clonal expansion and differentiation of B lymphocytes into immunoglobulins-secreting plasma cells. Secreted immunoglobulins mediate the effector phase of humoral immunity, which results in the elimination of bound antigens. The antigen binding site is formed by the variable domain of one heavy chain, together with that of its associated light chain. Thus, each immunoglobulin has two antigen binding sites with remarkable affinity for a particular antigen. The variable domains are assembled by a process called V-(D)-J rearrangement and can then be subjected to somatic hypermutations which, after exposure to antigen and selection, allow affinity maturation for a particular antigen. IgD is the major antigen receptor isotype on the surface of most peripheral B cells, where it is coexpressed with IgM. The membrane-bound IgD (mIgD) induces the phosphorylation of CD79A and CD79B by the Src family of protein tyrosine kinases. Soluble IgD (sIgD) concentration in serum is below those of IgG, IgA, and IgM but much higher than that of IgE. IgM and IgD molecules present on B cells have identical V regions and antigen-binding sites. After the antigen binds to the B cell receptor, the secreted form sIgD is shut off. IgD is a potent inducer of TNF, IL1B, and IL1RN. IgD also induces release of IL6, IL10, and LIF from peripheral blood mononuclear cells. Monocytes seem to be the main producers of cytokines in vitro in the presence of IgD. This Homo sapiens (Human) protein is Immunoglobulin delta heavy chain.